The primary structure comprises 123 residues: Cholecystokinin (123 aa).

The N-terminal stretch at 1–19 (MNAGICVCVLLAALSTSSC) is a signal peptide. The propeptide occupies 20 to 103 (LSLPAVSEDG…MGNNHRIKDR (84 aa)). The tract at residues 43 to 67 (HTRAAPSSGQLSLLSKAEDDEEPRS) is disordered. Y105 is subject to Sulfotyrosine. F111 is modified (phenylalanine amide). Positions 115-123 (SAEEYEYSS) are excised as a propeptide. Residues Y119 and Y121 each carry the sulfotyrosine modification.

It belongs to the gastrin/cholecystokinin family. In terms of processing, the precursor is cleaved by proteases to produce a number of active cholecystokinins. Expressed in the ovary, kidney, gill, gastrointestinal tract and pituitary. Differentially expressed in the brain in the optic tectum-thalamus, hypothalamus, telencephalon, olfactory bulb and tract, preoptic region and posterior brain region. Expression is strongest in the hypothalamus, where localization is to the posterior ventrolateral region. Expression in the brain is transiently increased 2 hours after feeding. Abundant in the sensory layers of the vagal lobe and along the border of the sensory region of the lobe and the deep fiber laye. Also present in the facial lobe and throughout the glossopharyngeal lobe.

The protein resides in the secreted. Its function is as follows. This peptide hormone induces gall bladder contraction and the release of pancreatic enzymes in the gut. Induces the secretion of gonadotropin and growth hormone from the pituitary. Suppresses food intake and decreases the expression of preprosomatostatin genes in the forebrain. The sequence is that of Cholecystokinin (cck) from Carassius auratus (Goldfish).